The primary structure comprises 517 residues: L-amino-acid oxidase (517 aa).

A signal peptide spans 1–18 (MNVFFMFSLLFLAALESC). The cysteines at positions 29 and 192 are disulfide-linked. FAD contacts are provided by residues 62–63 (MA), 82–83 (EA), R90, and 106–109 (GPMR). A substrate-binding site is contributed by R109. Residue N191 is glycosylated (N-linked (GlcNAc...) asparagine). V280 contributes to the FAD binding site. Residues C350 and C431 are joined by a disulfide bond. A substrate-binding site is contributed by Y391. FAD contacts are provided by residues E476 and 483–488 (GWIDST). 483–484 (GW) contributes to the substrate binding site.

It belongs to the flavin monoamine oxidase family. FIG1 subfamily. As to quaternary structure, homodimer; non-covalently linked. FAD serves as cofactor. Post-translationally, N-glycosylated. As to expression, expressed by the venom gland.

It localises to the secreted. It carries out the reaction an L-alpha-amino acid + O2 + H2O = a 2-oxocarboxylate + H2O2 + NH4(+). In terms of biological role, catalyzes an oxidative deamination of predominantly hydrophobic and aromatic L-amino acids, thus producing hydrogen peroxide that may contribute to the diverse toxic effects of this enzyme. Exhibits diverse biological activities, such as hemorrhage, hemolysis, edema, apoptosis of vascular endothelial cells or tumor cell lines, antibacterial and antiparasitic activities, as well as regulation of platelet aggregation. Its effect on platelets is controversial, since it either induces aggregation or inhibits agonist-induced aggregation. These different effects are probably due to different experimental conditions. The protein is L-amino-acid oxidase of Demansia vestigiata (Lesser black whip snake).